Consider the following 270-residue polypeptide: A-type potassium channel modulatory protein KCNIP2 (270 aa).

Residues 1-17 (MRGQGRKESLSDSRDLD) show a composition bias toward basic and acidic residues. The tract at residues 1–32 (MRGQGRKESLSDSRDLDGSYDQLTGHPPGPTK) is disordered. Phosphoserine is present on serine 9. 2 S-palmitoyl cysteine lipidation sites follow: cysteine 45 and cysteine 46. Residues 81–137 (FELSTVCHRPEGLEQLQEQTKFTRKELQVLYRGFKNECPSGIVNEENFKQIYSQFFP) form the EF-hand 1; degenerate domain. EF-hand domains follow at residues 140-175 (DSST…ILRG), 176-211 (TVDD…IYDM), and 224-259 (APRE…DENI). Ca(2+) is bound by residues aspartate 153, asparagine 155, aspartate 157, serine 159, aspartate 164, aspartate 189, asparagine 191, aspartate 193, cysteine 195, glutamate 200, aspartate 237, asparagine 239, aspartate 241, and glutamate 248. Positions 257 to 270 (ENIMRSMQLFDNVI) are interaction with KCND2.

Belongs to the recoverin family. As to quaternary structure, component of heteromultimeric potassium channels. Identified in potassium channel complexes containing KCND1, KCND2, KCND3, KCNIP1, KCNIP2, KCNIP3, KCNIP4, DPP6 and DPP10. The KCND2-KCNIP2 channel complex contains four KCND2 and four KCNIP2 subunits. Interacts with KCND2. Probably part of a complex consisting of KCNIP1, KCNIP2 isoform 3 and KCND2. At least isoform 2 and isoform 3 can self-associate to form homodimers and homotetramers. Isoform 3 interacts with KCNIP1 in a calcium-dependent manner. Interacts with KCND3; each KCNIP2 monomer interacts with two adjacent KCND3 subunits, through both the N-terminal inactivation ball of a KCND3 subunit and a C-terminal helix from the adjacent KCND3 subunit, clamping them together; this interaction modulates the channel gating kinetics. Palmitoylated. Palmitoylation enhances association with the plasma membrane. As to expression, expressed in brain. Colocalizes with KCND2 in excitatory neurons including cortical and hippocampal CA1 pyramidal cells. Isoform 3 is expressed in heart and in umbilical vein endothelial cells. Not expressed in fetal heart.

The protein localises to the cell membrane. Its function is as follows. Regulatory subunit of Kv4/D (Shal)-type voltage-gated rapidly inactivating A-type potassium channels. Modulates channel density, inactivation kinetics and rate of recovery from inactivation in a calcium-dependent and isoform-specific manner. Involved in KCND2 and KCND3 trafficking to the cell surface. May be required for the expression of I(To) currents in the heart. The chain is A-type potassium channel modulatory protein KCNIP2 from Homo sapiens (Human).